The primary structure comprises 69 residues: Conotoxin Cal12.1p4 (69 aa).

Residues 1–23 constitute a propeptide that is removed on maturation; the sequence is DLITNSYTRGKPRHVTSWRNLKT.

Post-translationally, contains 4 disulfide bonds. Expressed by the venom duct.

It localises to the secreted. The chain is Conotoxin Cal12.1p4 from Californiconus californicus (California cone).